We begin with the raw amino-acid sequence, 1110 residues long: MEYRCLDCTTGDTIAVDLKVFLDLKEFKSYLSNKWGVPRAQILLLYPFGIKLKDSNFRHASDLESPEIYVYDRRLFSLTNEPHTGADAHADSDADADADTADVEQQAAQLLDSLLEQRRHPQLQDDLIRPIPSPLEDLKIADGISHRTAVSMLTTNLGWLSALEIDVNYYSSISDKCKEDTQSLARCLGTCEQYLGLYCYDVERLYNSNVVFLDQLHENSLQSRWKECYKNTLTKLAGLNGYLSQYVDEAKQIEKEVTLKSLDGKVNSKLKQIKKELDSYADQRKSIQNEIENLKNIKDMKNDDNELHEMQKSFDSIADTVRKASRDILDKDDALFTDEYITQEVVPVMIDIQKKVKTLLTVSQALYENMHELLTHKRNFQIQIIVKLGQIAWIQLQISELKQYLLNDCNADLTLYKDLEVEFAQIEDYPLIYGLYLVEKYRRQVWKCGMAKNMISISNDIKERSAAELTTRKNWYKNFGELSKPFNEDLTKYNDLDEISKLMNSDSQFLKEKFIQDLRNEQRKLEDVIKSFIKNMHDLGLSKETTQVLEQSFKEASNSNICSQIDVTYDHRRINNENDLIKRYKIRIRKLESLLHEQGYSSISKWPSGVLNHTDRPNYFADNVSPAGRSLLVSSSALLGLEPSASLKTDAEMFDLKKEIGDLSEKVTALEKDNKLKTDQLKITHSKLIDIEVEKAAFRETLNHLNKELARLTVNEEDQTNLLKEERLRFKKEMTSVTVVNQNLMNNLDALQKTFEDVELENAHLKSKLKELQQRQDQLIEDSANEKLEIKSKYEKLIKEKDENMGQAFAVTNKAISGEQNKTESDIIHSSPYPEAILHLRTELFDIFSTNIYILENIGLLLTETSAGKFEIKRVKGLKKGLSQSLLDESAQISPIDGVINSVVYKNIRAQYEQLPNDNNISNCELFISSVKKIYENKLFESAVINRFKDIETLAKRLTKENKSKRILIDLYQNERLAVKDFRVNDLALFLPTKEALSETKSLSSSMASSFSSVDLSTPISGANNNITASRKSLHKPNVKHPWAAFTAFNESSRYFLKDENMVTDNKEWFIGKITDIQRQVVENISTNNPFKLPKDTVWYLISAEMISID.

Coiled-coil stretches lie at residues glycine 264–glutamate 309 and alanine 651–glutamate 803.

It belongs to the ATG11 family. As to quaternary structure, homodimer.

The protein resides in the preautophagosomal structure membrane. The protein localises to the vacuole membrane. Involved in cytoplasm to vacuole transport (Cvt), pexophagy, mitophagy and nucleophagy. Recruits mitochondria for their selective degradation via autophagy (mitophagy) during starvation. Works as scaffold proteins that recruit ATG proteins to the pre-autophagosome (PAS), the site of vesicle/autophagosome formation. Required for the Cvt vesicles completion. Contributes through its regulation of pexophagy to survival during engulfment by host phagocytic cells during infection. Through its function in autophagy, acts as an important virulence factor that supports the viability of C.glabrata in the phagosomal compartment of infected innate immune cells. This chain is Autophagy-related protein 11 (ATG11), found in Candida glabrata (strain ATCC 2001 / BCRC 20586 / JCM 3761 / NBRC 0622 / NRRL Y-65 / CBS 138) (Yeast).